The sequence spans 314 residues: DNA-directed RNA polymerase subunit alpha (314 aa).

An alpha N-terminal domain (alpha-NTD) region spans residues 1–228; sequence MIEIEKPKIE…EHLNIFVGLT (228 aa). Residues 245–314 form an alpha C-terminal domain (alpha-CTD) region; sequence KEKVMEMTIE…DLGLGLRDDD (70 aa).

The protein belongs to the RNA polymerase alpha chain family. Homodimer. The RNAP catalytic core consists of 2 alpha, 1 beta, 1 beta' and 1 omega subunit. When a sigma factor is associated with the core the holoenzyme is formed, which can initiate transcription.

The catalysed reaction is RNA(n) + a ribonucleoside 5'-triphosphate = RNA(n+1) + diphosphate. Functionally, DNA-dependent RNA polymerase catalyzes the transcription of DNA into RNA using the four ribonucleoside triphosphates as substrates. The polypeptide is DNA-directed RNA polymerase subunit alpha (Oceanobacillus iheyensis (strain DSM 14371 / CIP 107618 / JCM 11309 / KCTC 3954 / HTE831)).